The sequence spans 552 residues: Probable beta-glucosidase btgE (552 aa).

An N-terminal signal peptide occupies residues 1 to 18 (MRGAILATAAALAGTAMA). The disordered stretch occupies residues 250–291 (EPTSAPAAPSTTAVPATTTAAVPSTSSAAPSSSSTAPASTGA). Over residues 251-289 (PTSAPAAPSTTAVPATTTAAVPSTSSAAPSSSSTAPAST) the composition is skewed to low complexity. The active-site Proton donor is the Glu-392. Glu-488 functions as the Nucleophile in the catalytic mechanism.

This sequence belongs to the glycosyl hydrolase 17 family.

The protein resides in the secreted. It localises to the cell wall. It carries out the reaction Hydrolysis of terminal, non-reducing beta-D-glucosyl residues with release of beta-D-glucose.. It participates in glycan metabolism; cellulose degradation. Functionally, beta-glucosidases are one of a number of cellulolytic enzymes involved in the degradation of cellulosic biomass. Catalyzes the last step releasing glucose from the inhibitory cellobiose. The protein is Probable beta-glucosidase btgE (btgE) of Neosartorya fischeri (strain ATCC 1020 / DSM 3700 / CBS 544.65 / FGSC A1164 / JCM 1740 / NRRL 181 / WB 181) (Aspergillus fischerianus).